Here is a 279-residue protein sequence, read N- to C-terminus: Shikimate dehydrogenase (NADP(+)) (279 aa).

Residues 20-22 and T67 contribute to the shikimate site; that span reads SRS. Catalysis depends on K71, which acts as the Proton acceptor. D83 lines the NADP(+) pocket. Shikimate-binding residues include N92 and D108. NADP(+) contacts are provided by residues 134 to 138 and L223; that span reads GAGGA. Y225 lines the shikimate pocket. G246 contacts NADP(+).

Belongs to the shikimate dehydrogenase family. Homodimer.

It carries out the reaction shikimate + NADP(+) = 3-dehydroshikimate + NADPH + H(+). Its pathway is metabolic intermediate biosynthesis; chorismate biosynthesis; chorismate from D-erythrose 4-phosphate and phosphoenolpyruvate: step 4/7. Its function is as follows. Involved in the biosynthesis of the chorismate, which leads to the biosynthesis of aromatic amino acids. Catalyzes the reversible NADPH linked reduction of 3-dehydroshikimate (DHSA) to yield shikimate (SA). This Cereibacter sphaeroides (strain ATCC 17023 / DSM 158 / JCM 6121 / CCUG 31486 / LMG 2827 / NBRC 12203 / NCIMB 8253 / ATH 2.4.1.) (Rhodobacter sphaeroides) protein is Shikimate dehydrogenase (NADP(+)).